The primary structure comprises 603 residues: Complement factor I (603 aa).

An N-terminal signal peptide occupies residues 1 to 18 (MKLAHLSLFLLALHLSSS). Intrachain disulfides connect cysteine 36/cysteine 260, cysteine 46/cysteine 57, cysteine 51/cysteine 62, cysteine 64/cysteine 96, cysteine 70/cysteine 89, cysteine 78/cysteine 109, cysteine 144/cysteine 186, cysteine 157/cysteine 219, cysteine 191/cysteine 201, cysteine 234/cysteine 252, cysteine 246/cysteine 261, cysteine 264/cysteine 276, cysteine 271/cysteine 289, cysteine 283/cysteine 298, cysteine 348/cysteine 473, cysteine 386/cysteine 402, cysteine 394/cysteine 464, cysteine 487/cysteine 551, cysteine 515/cysteine 530, and cysteine 541/cysteine 570. In terms of domain architecture, Kazal-like spans 58–111 (IEGTCICKLPYQCPRAGTPVCAMNGRSYPTYCHQKSFECLHPEIKFSHNGTCAA). Asparagine 106, asparagine 116, asparagine 174, and asparagine 182 each carry an N-linked (GlcNAc...) asparagine glycan. The region spanning 117–217 (VSLIYGRTKT…TELSNGLAGV (101 aa)) is the SRCR domain. 2 LDL-receptor class A domains span residues 218–262 (VCYK…LCCK) and 263–299 (GCRGNASLCKSGVCIPDQYKCNGEVDCITGEDESRCE). The Ca(2+) site is built by lysine 244, asparagine 247, valine 249, aspartate 251, aspartate 257, and glutamate 258. Asparagine 267 carries an N-linked (GlcNAc...) asparagine glycan. Residues tyrosine 281, asparagine 284, glutamate 286, aspartate 288, aspartate 294, and glutamate 295 each coordinate Ca(2+). A Peptidase S1 domain is found at 361–594 (VIGGKPANVG…YFDWISYHVG (234 aa)). Catalysis depends on charge relay system residues histidine 401 and aspartate 449. Residue asparagine 514 is glycosylated (N-linked (GlcNAc...) asparagine). Serine 545 (charge relay system) is an active-site residue. An N-linked (GlcNAc...) asparagine glycan is attached at asparagine 556.

It belongs to the peptidase S1 family. In terms of assembly, heterodimer of a light and heavy chains; disulfide-linked. The fully processed and mature protein circulates as a zymogen, and is allosterically activated by substrate-induced remodeling of the active site. Interacts with C3b. Interacts with complement factor H. In terms of tissue distribution, expressed in the liver by hepatocytes. Also present in other cells such as monocytes, fibroblasts or keratinocytes.

It localises to the secreted. The protein resides in the extracellular space. The catalysed reaction is Inactivates complement subcomponents C3b, iC3b and C4b by proteolytic cleavage.. In terms of biological role, trypsin-like serine protease that plays an essential role in regulating the immune response by controlling all complement pathways. Inhibits these pathways by cleaving three peptide bonds in the alpha-chain of C3b and two bonds in the alpha-chain of C4b thereby inactivating these proteins. Essential cofactors for these reactions include factor H and C4BP in the fluid phase and membrane cofactor protein/CD46 and CR1 on cell surfaces. The presence of these cofactors on healthy cells allows degradation of deposited C3b by CFI in order to prevent undesired complement activation, while in apoptotic cells or microbes, the absence of such cofactors leads to C3b-mediated complement activation and subsequent opsonization. This Mus musculus (Mouse) protein is Complement factor I (Cfi).